Here is a 393-residue protein sequence, read N- to C-terminus: MAAVRRVVLIVIDSVGIGAMPDAADWGDAGANTLGNMARQRGGLPLPNLGRLGLGNLCAIEGTPPVDAPAGAYGRMAIFSHGKDTMTGHWEMVGIRPEAPFRTYPDGFPEDLIAEFCRRAGLEGVLGNKVASGTEIIKELGEEHLRTGWPIVYTSADSVFQVAAHEERFGLERLYEVCRIARDLLRPPHRVGRVIARPFVGTDRTNFTRTANRHDYALEPPRMLLDEVKDAGLSVLAVGKISDIFSGHGITYSVHTKSNADGIEKIHECLDRQEPGLIFANLVDFDMLYGHRRDVEGYARAMLEFDAALPAIMAKLGPEDVLVVTADHGNDPTYIGTDHTREYVPVLLYGEPIKPGVDVGTRASLADLGATVADLLGVPQTGFGESFADQIRK.

Mn(2+)-binding residues include D13, D286, H291, D327, H328, and H339.

The protein belongs to the phosphopentomutase family. It depends on Mn(2+) as a cofactor.

Its subcellular location is the cytoplasm. The enzyme catalyses 2-deoxy-alpha-D-ribose 1-phosphate = 2-deoxy-D-ribose 5-phosphate. It catalyses the reaction alpha-D-ribose 1-phosphate = D-ribose 5-phosphate. It participates in carbohydrate degradation; 2-deoxy-D-ribose 1-phosphate degradation; D-glyceraldehyde 3-phosphate and acetaldehyde from 2-deoxy-alpha-D-ribose 1-phosphate: step 1/2. Isomerase that catalyzes the conversion of deoxy-ribose 1-phosphate (dRib-1-P) and ribose 1-phosphate (Rib-1-P) to deoxy-ribose 5-phosphate (dRib-5-P) and ribose 5-phosphate (Rib-5-P), respectively. This is Phosphopentomutase from Symbiobacterium thermophilum (strain DSM 24528 / JCM 14929 / IAM 14863 / T).